We begin with the raw amino-acid sequence, 320 residues long: Probable movement protein (320 aa).

Active-site residues include histidine 144, aspartate 171, and serine 199. Disordered stretches follow at residues 251–270 and 286–320; these read RRSR…QEKR and EFGR…GSSP.

The protein belongs to the tobamoviruses movement protein family.

Functionally, may play a role in virus cell to cell movement by increasing the size exclusion limit of plasmodesmata and forming a complex with viral RNA to assist its movement. May also have a papain-like protease activity and cleave the genome polyprotein. This chain is Probable movement protein, found in Malus sylvestris (European crab apple).